Consider the following 267-residue polypeptide: MLTITAINAFNDNYIWVLQQDTQQAVYVVDPGDVNVVLDYLNAHQLTLAGILITHHHRDHTGGIAALVAYVEQTTGHTLAVYGPQSEAIQGVNIAIEPQITQILHLPFLNSPVQVLSVPGHTAGHIAYLVDGALFCGDTLFSGGCGRLFEGTPAQMCHSLRLLAALPAETRVYCAHEYTLANLKFAQAADPSNAKLKAYNEQATALRAQGKATIPSTIGLERSINPFLRGLTPTIVDSIKQQFCDQDLSNVDELTYFTLLRQWKDIF.

Positions 55, 57, 59, 60, 121, 138, and 176 each coordinate Zn(2+).

The protein belongs to the metallo-beta-lactamase superfamily. Glyoxalase II family. In terms of assembly, monomer. The cofactor is Zn(2+).

The catalysed reaction is an S-(2-hydroxyacyl)glutathione + H2O = a 2-hydroxy carboxylate + glutathione + H(+). It participates in secondary metabolite metabolism; methylglyoxal degradation; (R)-lactate from methylglyoxal: step 2/2. Functionally, thiolesterase that catalyzes the hydrolysis of S-D-lactoyl-glutathione to form glutathione and D-lactic acid. The sequence is that of Hydroxyacylglutathione hydrolase from Shewanella oneidensis (strain ATCC 700550 / JCM 31522 / CIP 106686 / LMG 19005 / NCIMB 14063 / MR-1).